A 1063-amino-acid chain; its full sequence is JmjC domain-containing histone demethylation protein 1 (1063 aa).

The JmjC domain maps to 86 to 266 (LYNVLSLEYS…TQLRVYQVEN (181 aa)). Position 160 (Thr-160) interacts with substrate. Fe cation contacts are provided by His-163 and Asp-165. Residue Lys-180 participates in substrate binding. His-234 is a binding site for Fe cation. The segment covering 379 to 389 (GLEEEAEDEDV) has biased composition (acidic residues). Disordered regions lie at residues 379 to 400 (GLEE…AEER), 554 to 750 (ESDE…NPYN), and 776 to 1040 (VELH…KRAK). The segment covering 390-400 (KPETKKEAEER) has biased composition (basic and acidic residues). Composition is skewed to acidic residues over residues 594-605 (PEYDEDMEEYDP) and 613-631 (ELEE…EEEY). The span at 636 to 646 (TRRSSTRGSAS) shows a compositional bias: low complexity. Basic and acidic residues-rich tracts occupy residues 647 to 665 (TKEE…PKKE), 674 to 712 (EKSS…ELRA), 776 to 806 (VELH…HEDS), 813 to 835 (PYDR…DSHR), and 892 to 902 (EPRRSNDRRTS). Positions 926 to 937 (AEAASASSSRHS) are enriched in low complexity. Composition is skewed to polar residues over residues 950 to 963 (LNSS…TPMY) and 973 to 982 (WLPNTSNVTR). Residues 1005 to 1016 (PPFPRSITPPPV) are compositionally biased toward pro residues. Residues 1020–1030 (ELKSQSNGRKS) are compositionally biased toward polar residues. The segment covering 1031-1040 (NYSEDGKRAK) has biased composition (basic and acidic residues).

The protein belongs to the JHDM1 histone demethylase family. Requires Fe(2+) as cofactor.

It localises to the nucleus. The catalysed reaction is N(6),N(6)-dimethyl-L-lysyl(36)-[histone H3] + 2 2-oxoglutarate + 2 O2 = L-lysyl(36)-[histone H3] + 2 formaldehyde + 2 succinate + 2 CO2. Histone demethylase that specifically demethylates 'Lys-36' of histone H3, thereby playing a central role in histone code. The sequence is that of JmjC domain-containing histone demethylation protein 1 (jhdm-1) from Caenorhabditis briggsae.